The chain runs to 217 residues: 3-demethoxyubiquinol 3-hydroxylase (217 aa).

Glutamate 66, glutamate 96, histidine 99, glutamate 148, glutamate 180, and histidine 183 together coordinate Fe cation.

Belongs to the COQ7 family. Fe cation serves as cofactor.

The protein resides in the cell membrane. The enzyme catalyses a 5-methoxy-2-methyl-3-(all-trans-polyprenyl)benzene-1,4-diol + AH2 + O2 = a 3-demethylubiquinol + A + H2O. Its pathway is cofactor biosynthesis; ubiquinone biosynthesis. In terms of biological role, catalyzes the hydroxylation of 2-nonaprenyl-3-methyl-6-methoxy-1,4-benzoquinol during ubiquinone biosynthesis. This is 3-demethoxyubiquinol 3-hydroxylase from Xylella fastidiosa (strain 9a5c).